The following is a 73-amino-acid chain: Protein SlyX homolog (73 aa).

It belongs to the SlyX family.

This chain is Protein SlyX homolog, found in Pasteurella multocida (strain Pm70).